We begin with the raw amino-acid sequence, 200 residues long: Mediator of RNA polymerase II transcription subunit 22 (200 aa).

The stretch at 93–122 (SVNEAIDQRNQQLRALQEECDRKLITLRDE) forms a coiled coil. A disordered region spans residues 167 to 200 (SAPLLASPETGAGPLQSAAPVHSHGGGPGPTEHT). The span at 190 to 200 (HGGGPGPTEHT) shows a compositional bias: gly residues.

Belongs to the Mediator complex subunit 22 family. As to quaternary structure, component of the Mediator complex, which is composed of MED1, MED4, MED6, MED7, MED8, MED9, MED10, MED11, MED12, MED13, MED13L, MED14, MED15, MED16, MED17, MED18, MED19, MED20, MED21, MED22, MED23, MED24, MED25, MED26, MED27, MED29, MED30, MED31, CCNC, CDK8 and CDC2L6/CDK11. The MED12, MED13, CCNC and CDK8 subunits form a distinct module termed the CDK8 module. Mediator containing the CDK8 module is less active than Mediator lacking this module in supporting transcriptional activation. Individual preparations of the Mediator complex lacking one or more distinct subunits have been variously termed ARC, CRSP, DRIP, PC2, SMCC and TRAP.

It localises to the nucleus. Its function is as follows. Component of the Mediator complex, a coactivator involved in the regulated transcription of nearly all RNA polymerase II-dependent genes. Mediator functions as a bridge to convey information from gene-specific regulatory proteins to the basal RNA polymerase II transcription machinery. Mediator is recruited to promoters by direct interactions with regulatory proteins and serves as a scaffold for the assembly of a functional preinitiation complex with RNA polymerase II and the general transcription factors. This chain is Mediator of RNA polymerase II transcription subunit 22 (Med22), found in Rattus norvegicus (Rat).